Consider the following 232-residue polypeptide: Sugar fermentation stimulation protein homolog (232 aa).

Belongs to the SfsA family.

This is Sugar fermentation stimulation protein homolog from Magnetococcus marinus (strain ATCC BAA-1437 / JCM 17883 / MC-1).